The chain runs to 240 residues: 7-cyano-7-deazaguanine synthase (240 aa).

18–28 (FSGGQDSTTCL) is a binding site for ATP. Zn(2+)-binding residues include C197, C206, C209, and C212.

This sequence belongs to the QueC family. Zn(2+) is required as a cofactor.

The catalysed reaction is 7-carboxy-7-deazaguanine + NH4(+) + ATP = 7-cyano-7-deazaguanine + ADP + phosphate + H2O + H(+). Its pathway is purine metabolism; 7-cyano-7-deazaguanine biosynthesis. Catalyzes the ATP-dependent conversion of 7-carboxy-7-deazaguanine (CDG) to 7-cyano-7-deazaguanine (preQ(0)). This chain is 7-cyano-7-deazaguanine synthase, found in Shewanella baltica (strain OS223).